Here is a 786-residue protein sequence, read N- to C-terminus: Endonuclease MutS2 (786 aa).

335–342 (GPNTGGKT) lines the ATP pocket. One can recognise a Smr domain in the interval 711-786 (LDLRGERFEN…GLGVTVVELK (76 aa)).

Belongs to the DNA mismatch repair MutS family. MutS2 subfamily. Homodimer. Binds to stalled ribosomes, contacting rRNA.

Endonuclease that is involved in the suppression of homologous recombination and thus may have a key role in the control of bacterial genetic diversity. In terms of biological role, acts as a ribosome collision sensor, splitting the ribosome into its 2 subunits. Detects stalled/collided 70S ribosomes which it binds and splits by an ATP-hydrolysis driven conformational change. Acts upstream of the ribosome quality control system (RQC), a ribosome-associated complex that mediates the extraction of incompletely synthesized nascent chains from stalled ribosomes and their subsequent degradation. Probably generates substrates for RQC. This chain is Endonuclease MutS2, found in Bacillus cereus (strain B4264).